A 412-amino-acid polypeptide reads, in one-letter code: 2,3-bisphosphoglycerate-independent phosphoglycerate mutase (412 aa).

It belongs to the BPG-independent phosphoglycerate mutase family. A-PGAM subfamily.

It catalyses the reaction (2R)-2-phosphoglycerate = (2R)-3-phosphoglycerate. It participates in carbohydrate degradation; glycolysis; pyruvate from D-glyceraldehyde 3-phosphate: step 3/5. Functionally, catalyzes the interconversion of 2-phosphoglycerate and 3-phosphoglycerate. The chain is 2,3-bisphosphoglycerate-independent phosphoglycerate mutase (apgM) from Pyrococcus horikoshii (strain ATCC 700860 / DSM 12428 / JCM 9974 / NBRC 100139 / OT-3).